A 382-amino-acid chain; its full sequence is Proton extrusion protein PxcA (382 aa).

Transmembrane regions (helical) follow at residues T156–V176, A257–F277, I305–L325, and F340–I360.

It belongs to the CemA family.

Its subcellular location is the cell inner membrane. In terms of biological role, required for H(+) efflux immediately after light irradiation to form a rapid H(+) concentration gradient across the thylakoid membranes. Together with PxcL, contributes to transient H(+) uptake following dark to light transition. This chain is Proton extrusion protein PxcA, found in Synechococcus sp. (strain WH7803).